A 158-amino-acid polypeptide reads, in one-letter code: C-type lectin BML-2 (158 aa).

The N-terminal stretch at 1-23 (MGHFTFTGLCLLAMFLSLRGAEC) is a signal peptide. 4 disulfides stabilise this stretch: cysteine 26–cysteine 37, cysteine 54–cysteine 154, cysteine 61–cysteine 156, and cysteine 129–cysteine 146. A C-type lectin domain is found at 33–155 (KNGLCYKVFS…CESLHPFLCQ (123 aa)). The Mannose-binding signature appears at 119 to 121 (EPN). A glycan (N-linked (GlcNAc...) asparagine) is linked at asparagine 121. Residues glutamate 127, asparagine 142, and aspartate 143 each coordinate Ca(2+).

This sequence belongs to the true venom lectin family. Dimer. Probably non-covalently linked. In terms of tissue distribution, expressed by the venom gland.

It localises to the secreted. In terms of biological role, recombinant C-type lectin BML-2 is able to agglutinate erythrocytes. May be a calcium-dependent lectin. The protein is C-type lectin BML-2 of Bungarus multicinctus (Many-banded krait).